Reading from the N-terminus, the 191-residue chain is Potassium-transporting ATPase KdpC subunit (191 aa).

The helical transmembrane segment at 6-26 threads the bilayer; sequence PALVLFILLTLLTGGVYPLLT.

Belongs to the KdpC family. The system is composed of three essential subunits: KdpA, KdpB and KdpC.

The protein localises to the cell inner membrane. Its function is as follows. Part of the high-affinity ATP-driven potassium transport (or Kdp) system, which catalyzes the hydrolysis of ATP coupled with the electrogenic transport of potassium into the cytoplasm. This subunit acts as a catalytic chaperone that increases the ATP-binding affinity of the ATP-hydrolyzing subunit KdpB by the formation of a transient KdpB/KdpC/ATP ternary complex. The sequence is that of Potassium-transporting ATPase KdpC subunit from Klebsiella pneumoniae subsp. pneumoniae (strain ATCC 700721 / MGH 78578).